The sequence spans 445 residues: Acyl-lipid (7-3)-desaturase (445 aa).

The Cytochrome b5 heme-binding domain occupies 11 to 91 (VAELRAAEVA…MSKFFVGSLD (81 aa)). Heme contacts are provided by His-50 and His-73. The next 2 helical transmembrane spans lie at 126–146 (YWLK…YMLL) and 148–168 (GKTL…GLNI). A Histidine box-1 motif is present at residues 170–174 (HDANH). The Histidine box-2 signature appears at 205–210 (HVVMHH). The next 3 helical transmembrane spans lie at 247-267 (ILPG…LELL), 283-303 (LFAP…ALPL), and 312-332 (ALCI…FFFI). The short motif at 380–384 (QIEHH) is the Histidine box-3 element.

This sequence belongs to the fatty acid desaturase type 1 family. Requires Fe(2+) as cofactor.

The protein localises to the membrane. The enzyme catalyses a (7Z,10Z,13Z,16Z,19Z)-docosapentaenoyl-containing glycerolipid + 2 Fe(II)-[cytochrome b5] + O2 + 2 H(+) = a (4Z,7Z,10Z,13Z,16Z,19Z)-docosahexaenoyl-containing glycerolipid + 2 Fe(III)-[cytochrome b5] + 2 H2O. The catalysed reaction is a (7Z,10Z,13Z,16Z)-docosatetraenoyl-containing glycerolipid + 2 Fe(II)-[cytochrome b5] + O2 + 2 H(+) = a (4Z,7Z,10Z,13Z,16Z)-docosapentaenoyl-containing glycerolipid + 2 Fe(III)-[cytochrome b5] + 2 H2O. Its function is as follows. Fatty acid desaturase that introduces a cis double bond at the 4-position in 22-carbon polyunsaturated fatty acids that contain a Delta(7) double bond, resulting in the production of delta-4 desaturated fatty acid docosahexanoic acid (DHA). Mediates desaturation of 22:5n-3 and 22:4n-6 into 22:6n-3 and 22:5n-6 respectively. In Diacronema lutheri (Unicellular marine alga), this protein is Acyl-lipid (7-3)-desaturase.